Reading from the N-terminus, the 243-residue chain is Pyrimidodiazepine synthase (243 aa).

Residues 20-102 (GILRLYSMRF…YLDEQYPLRP (83 aa)) enclose the GST N-terminal domain. The active-site Nucleophile is cysteine 30. Residues lysine 57, valine 70, and 86 to 87 (ES) contribute to the glutathione site. Residues 107 to 230 (DPLKKVQDKL…VQAEFLRTRS (124 aa)) form the GST C-terminal domain.

It belongs to the GST superfamily. Omega family. As to quaternary structure, homodimer.

It carries out the reaction 2-amino-6-acetyl-3,7,8,9-tetrahydro-3H-pyrimido[4,5-b][1,4]diazepin-4-one + glutathione disulfide + H2O = 6-pyruvoyl-5,6,7,8-tetrahydropterin + 2 glutathione. Functionally, mediates the conversion of 2-amino-4-oxo-6-pyruvoyl-5,6,7,8-tetrahydropteridine (6-PTP; also named 6-pyruvoyltetrahydropterin) to 2-amino-6-acetyl-3,7,8,9-tetrahydro-3H-pyrimido(4,5-b)[1,4]diazepin-4-one (pyrimidodiazepine or PDA), a key intermediate in red eye pigment drosopterin biosynthesis. This Drosophila melanogaster (Fruit fly) protein is Pyrimidodiazepine synthase.